The sequence spans 93 residues: Putative pterin-4-alpha-carbinolamine dehydratase (93 aa).

The protein belongs to the pterin-4-alpha-carbinolamine dehydratase family.

It catalyses the reaction (4aS,6R)-4a-hydroxy-L-erythro-5,6,7,8-tetrahydrobiopterin = (6R)-L-erythro-6,7-dihydrobiopterin + H2O. The polypeptide is Putative pterin-4-alpha-carbinolamine dehydratase (Roseiflexus sp. (strain RS-1)).